Here is an 80-residue protein sequence, read N- to C-terminus: Small, acid-soluble spore protein Tlp (80 aa).

Residues 34 to 73 (AKESMEFATDEEKQRIQEKNARRNESIESFRSEIQDESAA) are compositionally biased toward basic and acidic residues. Positions 34 to 80 (AKESMEFATDEEKQRIQEKNARRNESIESFRSEIQDESAARENGYQS) are disordered.

Belongs to the Tlp family.

Its subcellular location is the spore core. The protein is Small, acid-soluble spore protein Tlp of Bacillus velezensis (strain DSM 23117 / BGSC 10A6 / LMG 26770 / FZB42) (Bacillus amyloliquefaciens subsp. plantarum).